A 209-amino-acid polypeptide reads, in one-letter code: Ribosomal RNA large subunit methyltransferase E (209 aa).

The S-adenosyl-L-methionine site is built by glycine 63, tryptophan 65, aspartate 83, aspartate 99, and aspartate 124. The active-site Proton acceptor is lysine 164.

This sequence belongs to the class I-like SAM-binding methyltransferase superfamily. RNA methyltransferase RlmE family.

The protein localises to the cytoplasm. It carries out the reaction uridine(2552) in 23S rRNA + S-adenosyl-L-methionine = 2'-O-methyluridine(2552) in 23S rRNA + S-adenosyl-L-homocysteine + H(+). Functionally, specifically methylates the uridine in position 2552 of 23S rRNA at the 2'-O position of the ribose in the fully assembled 50S ribosomal subunit. The sequence is that of Ribosomal RNA large subunit methyltransferase E from Shewanella baltica (strain OS223).